The primary structure comprises 151 residues: Large ribosomal subunit protein eL19 (151 aa).

Residues 62-93 form a disordered region; the sequence is RLKERRKKRSLKSEGKKSGSRKGKKGARANSK. Residues 79–88 show a composition bias toward basic residues; the sequence is SGSRKGKKGA.

It belongs to the eukaryotic ribosomal protein eL19 family. In terms of assembly, part of the 50S ribosomal subunit.

Binds to the 23S rRNA. The chain is Large ribosomal subunit protein eL19 from Saccharolobus solfataricus (strain ATCC 35092 / DSM 1617 / JCM 11322 / P2) (Sulfolobus solfataricus).